The sequence spans 511 residues: MKKRALVSVSDKTGVVEFVKGLLEQGIEVISTGGTKKLLEKNGLQVIGISEVTGFPEIMDGRVKTLHPNIHGGLLAVRDNETHVAQMNELGMEPIDFVIVNLYPFKETIAKPDVTFADAIENIDIGGPTMIRSAAKNHKFVSVIVDPVDYDVVLAELKENGEVKEETKRKLAAKVFRHTAAYDALISNYLTEQMGEESPETLTVTFEKKQDLRYGENPHQKATFYKAPFAVTSSVAYAEQLHGKELSYNNINDADAALSIVKEFTEPAVVAVKHMNPCGVGVGTDIHEAYTRAYEADPVSIFGGIIAANREIDKATAEKLHEIFLEIIIAPSFSKEALEVLQSKKNLRLLTVNIEKATSASKKLTSVQGGLLVQEEDTLSLDESTISIPTKREPSEQEWKDLKLAWKVVKHVKSNAIVLAKDDMTIGVGAGQMNRVGSAKIAITQAGEKAQGSALASDAFFPMPDTVEEAAKAGITAIIQPGGSIRDEDSIKVADTYGIAMVFTGVRHFKH.

The 145-residue stretch at 1–145 (MKKRALVSVS…KNHKFVSVIV (145 aa)) folds into the MGS-like domain.

This sequence belongs to the PurH family.

The catalysed reaction is (6R)-10-formyltetrahydrofolate + 5-amino-1-(5-phospho-beta-D-ribosyl)imidazole-4-carboxamide = 5-formamido-1-(5-phospho-D-ribosyl)imidazole-4-carboxamide + (6S)-5,6,7,8-tetrahydrofolate. It carries out the reaction IMP + H2O = 5-formamido-1-(5-phospho-D-ribosyl)imidazole-4-carboxamide. It functions in the pathway purine metabolism; IMP biosynthesis via de novo pathway; 5-formamido-1-(5-phospho-D-ribosyl)imidazole-4-carboxamide from 5-amino-1-(5-phospho-D-ribosyl)imidazole-4-carboxamide (10-formyl THF route): step 1/1. Its pathway is purine metabolism; IMP biosynthesis via de novo pathway; IMP from 5-formamido-1-(5-phospho-D-ribosyl)imidazole-4-carboxamide: step 1/1. The polypeptide is Bifunctional purine biosynthesis protein PurH (Bacillus thuringiensis subsp. konkukian (strain 97-27)).